Reading from the N-terminus, the 103-residue chain is Protein S100-A16 (103 aa).

In terms of domain architecture, EF-hand 1; degenerate spans 12 to 47 (VIVLVENFYKYVSKYSLVKNKISKSSFREMLQKELN). The EF-hand 2 domain maps to 54-89 (GNRKAADKLIQNLDANHDGRISFDEYWTLIGGITGP). 5 residues coordinate Ca(2+): Asp67, Asn69, Asp71, Arg73, and Glu78.

It belongs to the S-100 family. Homodimer. Interacts with TP53. In terms of tissue distribution, ubiquitous. Highly expressed in esophagus, adipose tissues and colon. Expressed at lower level in lung, brain, pancreas and skeletal muscle. Expression is up-regulated in tumors of bladder, lung, thyroid gland, pancreas and ovary. Expressed in astrocytes.

It localises to the nucleus. Its subcellular location is the nucleolus. The protein resides in the cytoplasm. Its function is as follows. Calcium-binding protein. Binds one calcium ion per monomer. Can promote differentiation of adipocytes (in vitro). Overexpression in preadipocytes increases their proliferation, enhances adipogenesis and reduces insulin-stimulated glucose uptake. This is Protein S100-A16 from Homo sapiens (Human).